The sequence spans 623 residues: V-type proton ATPase catalytic subunit A (623 aa).

Residue 252–259 (GAFGCGKT) coordinates ATP.

It belongs to the ATPase alpha/beta chains family. V-ATPase is a heteromultimeric enzyme composed of a peripheral catalytic V1 complex (main components: subunits A, B, C, D, E, and F) attached to an integral membrane V0 proton pore complex (main component: the proteolipid protein).

It catalyses the reaction ATP + H2O + 4 H(+)(in) = ADP + phosphate + 5 H(+)(out). Its function is as follows. Catalytic subunit of the peripheral V1 complex of vacuolar ATPase. V-ATPase vacuolar ATPase is responsible for acidifying a variety of intracellular compartments in eukaryotic cells. The sequence is that of V-type proton ATPase catalytic subunit A from Citrus unshiu (Satsuma mandarin).